The following is a 50-amino-acid chain: Large ribosomal subunit protein eL39 (50 aa).

This sequence belongs to the eukaryotic ribosomal protein eL39 family.

In Methanoculleus marisnigri (strain ATCC 35101 / DSM 1498 / JR1), this protein is Large ribosomal subunit protein eL39.